We begin with the raw amino-acid sequence, 253 residues long: Probable transcriptional regulatory protein RPR_05505 (253 aa).

This sequence belongs to the TACO1 family.

The protein localises to the cytoplasm. This is Probable transcriptional regulatory protein RPR_05505 from Rickettsia peacockii (strain Rustic).